The sequence spans 570 residues: Urease subunit alpha (570 aa).

The Urease domain maps to 131–570 (GGMDSHIHFI…LPMAQRYFLF (440 aa)). His-136, His-138, and Lys-219 together coordinate Ni(2+). Lys-219 is subject to N6-carboxylysine. His-221 contacts substrate. Positions 248 and 274 each coordinate Ni(2+). His-322 acts as the Proton donor in catalysis. Asp-362 provides a ligand contact to Ni(2+).

This sequence belongs to the metallo-dependent hydrolases superfamily. Urease alpha subunit family. As to quaternary structure, heterotrimer of UreA (gamma), UreB (beta) and UreC (alpha) subunits. Three heterotrimers associate to form the active enzyme. Ni cation serves as cofactor. In terms of processing, carboxylation allows a single lysine to coordinate two nickel ions.

The protein localises to the cytoplasm. It catalyses the reaction urea + 2 H2O + H(+) = hydrogencarbonate + 2 NH4(+). The protein operates within nitrogen metabolism; urea degradation; CO(2) and NH(3) from urea (urease route): step 1/1. This chain is Urease subunit alpha, found in Rhizobium etli (strain ATCC 51251 / DSM 11541 / JCM 21823 / NBRC 15573 / CFN 42).